The sequence spans 146 residues: Anti-sigma F factor (146 aa).

It belongs to the anti-sigma-factor family.

It carries out the reaction L-seryl-[protein] + ATP = O-phospho-L-seryl-[protein] + ADP + H(+). The enzyme catalyses L-threonyl-[protein] + ATP = O-phospho-L-threonyl-[protein] + ADP + H(+). Its function is as follows. Binds to sigma F and blocks its ability to form an RNA polymerase holoenzyme (E-sigma F). Phosphorylates SpoIIAA on a serine residue. This phosphorylation may enable SpoIIAA to act as an anti-anti-sigma factor that counteracts SpoIIAB and thus releases sigma F from inhibition. The sequence is that of Anti-sigma F factor from Shouchella clausii (strain KSM-K16) (Alkalihalobacillus clausii).